A 304-amino-acid chain; its full sequence is DCN1-like protein 3 (304 aa).

Disordered stretches follow at residues 1 to 87 and 284 to 304; these read MGQC…EESS and EGEGRGALSSGPEGLCPEEQT. Gly2 is lipidated: N-myristoyl glycine. In terms of domain architecture, DCUN1 spans 86–278; the sequence is SSLQRLEELF…LFDTFVEWEM (193 aa).

Part of a complex containing DCUN1D3, CUL3 and RBX1. Interacts (via the DCUN1 domain) with the unneddylated cullins: interacts with CUL1, CUL2, CUL3, CUL4A, CUL4B and CUL5; these interactions promote the cullin neddylation and the identity of the cullin dictates the affinity of the interaction. Interacts preferentially with CUL3; this interaction triggers the relocalization of CUL3 to the cell membrane where CUL3 is neddylated. Interacts (via DCUN1 domain) with RBX1. May also interact with regulators or subunits of cullin-RING ligases such as RNF7, ELOB and DDB1; these interactions are bridged by cullins. Interacts (via DCUN1 domain) with CAND1; this interaction is bridged by cullins and strongly inhibits cullin neddylation. These CAND-cullin-DCNL complexes can only be neddylated in the presence of a substrate adapter. Interacts (via DCUN1 domain) with the N-terminally acetylated form of UBE2M and UBE2F.

It is found in the cell membrane. It localises to the cytoplasm. Its subcellular location is the nucleus. The protein localises to the perinuclear region. Functionally, contributes to the neddylation of all cullins by transferring NEDD8 from N-terminally acetylated NEDD8-conjugating E2s enzyme to different cullin C-terminal domain-RBX complexes and may play a role in the cell cycle progression by regulating the SCF ubiquitin E3 ligase complex, after UV damage. At the cell membrane, can promote and as well inhibit cullins neddylation. The protein is DCN1-like protein 3 of Bos taurus (Bovine).